The primary structure comprises 293 residues: Exosome complex component RRP4 (293 aa).

The region spanning 79-159 (EVGDIVVGRI…SDGAVSLHTR (81 aa)) is the S1 motif domain. Ser-124 carries the post-translational modification Phosphoserine.

This sequence belongs to the RRP4 family. Component of the RNA exosome core complex (Exo-9), composed of EXOSC1, EXOSC2, EXOSC3, EXOSC4, EXOSC5, EXOSC6, EXOSC7, EXOSC8 and EXOSC9; within the complex interacts with EXOSC4 and EXOSC7. The catalytically inactive RNA exosome core complex (Exo-9) associates with the catalytic subunit EXOSC10/RRP6. Exo-9 may associate with DIS3 to form the nucleolar exosome complex, or DIS3L to form the cytoplasmic exosome complex. Exo-9 is formed by a hexameric base ring consisting of the heterodimers EXOSC4-EXOSC9, EXOSC5-EXOSC8 and EXOSC6-EXOSC7, and a cap ring consisting of EXOSC1, EXOSC2 and EXOSC3. The RNA exosome complex associates with cofactors C1D/RRP47, MPHOSPH6/MPP6 and MTREX/MTR4. Interacts with GTPBP1. Interacts with ZFP36L1 (via N-terminus).

The protein resides in the cytoplasm. The protein localises to the nucleus. Its subcellular location is the nucleolus. In terms of biological role, non-catalytic component of the RNA exosome complex which has 3'-&gt;5' exoribonuclease activity and participates in a multitude of cellular RNA processing and degradation events. In the nucleus, the RNA exosome complex is involved in proper maturation of stable RNA species such as rRNA, snRNA and snoRNA, in the elimination of RNA processing by-products and non-coding 'pervasive' transcripts, such as antisense RNA species and promoter-upstream transcripts (PROMPTs), and of mRNAs with processing defects, thereby limiting or excluding their export to the cytoplasm. The RNA exosome may be involved in Ig class switch recombination (CSR) and/or Ig variable region somatic hypermutation (SHM) by targeting AICDA deamination activity to transcribed dsDNA substrates. In the cytoplasm, the RNA exosome complex is involved in general mRNA turnover and specifically degrades inherently unstable mRNAs containing AU-rich elements (AREs) within their 3' untranslated regions, and in RNA surveillance pathways, preventing translation of aberrant mRNAs. It seems to be involved in degradation of histone mRNA. The catalytic inactive RNA exosome core complex of 9 subunits (Exo-9) is proposed to play a pivotal role in the binding and presentation of RNA for ribonucleolysis, and to serve as a scaffold for the association with catalytic subunits and accessory proteins or complexes. EXOSC2 as peripheral part of the Exo-9 complex stabilizes the hexameric ring of RNase PH-domain subunits through contacts with EXOSC4 and EXOSC7. This Bos taurus (Bovine) protein is Exosome complex component RRP4 (EXOSC2).